A 282-amino-acid chain; its full sequence is Acyl-CoA-binding domain-containing protein 6 (282 aa).

The disordered stretch occupies residues 1 to 39 (MATPFLPSGATTGDSGGELSSGDDSGDMESFQTPEAEGT). At Ser41 the chain carries Phosphoserine. One can recognise an ACB domain in the interval 42-127 (LAELFEKAAA…VKKLDPGWNP (86 aa)). Residues 69–73 (YARFK) and Lys95 each bind an acyl-CoA. Position 106 is a phosphoserine (Ser106). Residue Tyr114 participates in an acyl-CoA binding. 2 ANK repeats span residues 191-220 (EGRALLHWACDRGHKELVKVLLQYEAGINC) and 224-253 (EGQTALHYAAACEFLDIVELLLQSGADPTL).

Monomer.

The protein localises to the cytoplasm. It is found in the nucleus. Its function is as follows. Binds long-chain acyl-coenzyme A molecules with a strong preference for unsaturated C18:1-CoA, lower affinity for unsaturated C20:4-CoA, and very weak affinity for saturated C16:0-CoA. Does not bind fatty acids. Plays a role in protein N-myristoylation. The chain is Acyl-CoA-binding domain-containing protein 6 (Acbd6) from Mus musculus (Mouse).